We begin with the raw amino-acid sequence, 200 residues long: Coiled-coil domain-containing protein 28B (200 aa).

The residue at position 1 (Met1) is an N-acetylmethionine. Residues 1-10 (MDDKKKKRSP) show a composition bias toward basic residues. The disordered stretch occupies residues 1-49 (MDDKKKKRSPKPCLAQPAQAPGTLRRVPVPTSHSGSLALGLPHLPSPKQ). Ser46 and Ser115 each carry phosphoserine. The segment covering 141–152 (EEEDDEEEEDGV) has biased composition (acidic residues). The segment at 141–164 (EEEDDEEEEDGVTEGLPEEQKKTM) is disordered. Residues 158 to 183 (EEQKKTMADRNLDQLLSNLEDLSNSI) are a coiled coil.

Interacts with BBS1, BBS2, BBS4, BBS5, BBS6, BBS7 and TTC8/BBS8. Interacts with MAPKAP1/SIN1 isoform 1 and RICTOR.

It localises to the cytoplasm. It is found in the cytoskeleton. Its subcellular location is the microtubule organizing center. The protein resides in the centrosome. Functionally, involved in ciliogenesis. Regulates cilia length through its interaction with MAPKAP1/SIN1 but independently of mTORC2 complex. Modulates mTORC2 complex assembly and function, possibly enhances AKT1 phosphorylation. Does not seem to modulate assembly and function of mTORC1 complex. In Homo sapiens (Human), this protein is Coiled-coil domain-containing protein 28B (CCDC28B).